A 1768-amino-acid polypeptide reads, in one-letter code: Callose synthase 11 (1768 aa).

The Cytoplasmic segment spans residues 1 to 308 (MRRQRPSVAT…WNVYRSFDRL (308 aa)). The chain crosses the membrane as a helical span at residues 309–329 (WILLLLYLQAAIIVATSDVKF). The Extracellular portion of the chain corresponds to 330–335 (PWQDRD). Residues 336 to 356 (VEVALLTVFISWAGLRLLQSV) traverse the membrane as a helical segment. The Cytoplasmic segment spans residues 357 to 370 (LDASTQYSLVSRET). A helical transmembrane segment spans residues 371–391 (YWLFIRLTLKFVVAVAWTVLF). Residues 392–421 (SVFYARIWSQKNKDGVWSRAANERVVTFLK) are Extracellular-facing. A helical membrane pass occupies residues 422–442 (VVFVYVIPELLALVLFIVPCI). Residues 443-480 (RNWVEELNLGVVYFLTWWFYSKTFVGRGMREGLVDNVK) are Cytoplasmic-facing. Residues 481–501 (YTLFWIIVLATKFIFSYFLQI) traverse the membrane as a helical segment. Residues 502-530 (RPLIAPTRALLNLKDATYNWHEFFGSTHR) lie on the Extracellular side of the membrane. A helical transmembrane segment spans residues 531–551 (IAVGMLWLPVILVYLMDLQIW). Residues 552-1341 (YSIYSSLVGA…FFRMLSFFYT (790 aa)) are Cytoplasmic-facing. Residues 1342–1362 (TVGYYFNTMLIVFTVYAFLWG) traverse the membrane as a helical segment. At 1363–1386 (RLYLALSGVEKIAKDRSSSNEALG) the chain is on the extracellular side. The helical transmembrane segment at 1387–1407 (AILNQQFIIQLGLFTALPMIL) threads the bilayer. At 1408-1413 (ENSLER) the chain is on the cytoplasmic side. Residues 1414–1434 (GFLPAVWDFITMQLQLASFFY) traverse the membrane as a helical segment. Topologically, residues 1435–1481 (TFSMGTRTHYFGRTILHGGAKYRATGRGFVVEHKKFAENYRLYARTH) are extracellular. A helical transmembrane segment spans residues 1482 to 1502 (FIKAIELAIILLVYAAYSPLA). The Cytoplasmic portion of the chain corresponds to 1503 to 1508 (KSSFVY). The chain crosses the membrane as a helical span at residues 1509 to 1529 (ILMTISSWFLITSWIISPFLF). Residues 1530–1583 (NPSGFDWLKTVNDFDDFIAWLWSRGGLFTKADQSWFTWWNEEQEHLKTTGVWGK) lie on the Extracellular side of the membrane. The helical transmembrane segment at 1584-1604 (LLEIILDLRFFFFQYSIVYHL) threads the bilayer. Topologically, residues 1605–1612 (RIAENRTS) are cytoplasmic. A helical transmembrane segment spans residues 1613–1633 (IGVYLISWGCIIGIVAIYITT). Residues 1634-1649 (IYAQKRYSVKEHIKYR) lie on the Extracellular side of the membrane. A helical membrane pass occupies residues 1650–1670 (FIQFLVILLTVLVVVMMLQFT). The Cytoplasmic portion of the chain corresponds to 1671-1673 (KLT). A helical transmembrane segment spans residues 1674–1694 (VVDLLISLLAFVPTGWGLISI). The Extracellular portion of the chain corresponds to 1695–1719 (AQVLKPFLLSTVVWDTVISVARFYD). The chain crosses the membrane as a helical span at residues 1720-1740 (LFFGLIVMAPVALLSWLPGFQ). Residues 1741 to 1768 (NMQTRILFNEAFSRGLQISIILAGKKST) lie on the Cytoplasmic side of the membrane.

It belongs to the glycosyltransferase 48 family. In terms of tissue distribution, ubiquitous.

The protein resides in the cell membrane. The enzyme catalyses [(1-&gt;3)-beta-D-glucosyl](n) + UDP-alpha-D-glucose = [(1-&gt;3)-beta-D-glucosyl](n+1) + UDP + H(+). Functionally, required the formation of the callose wall separating the tetraspores (interstitial wall), but not for the callose wall surrounding the pollen mother cells (peripheral wall). Functionally redudant to CALS12 (GSL5). During plant growth and development, callose is found as a transitory component of the cell plate in dividing cells, is a major component of pollen mother cell walls and pollen tubes, and is found as a structural component of plasmodesmatal canals. The polypeptide is Callose synthase 11 (CALS11) (Arabidopsis thaliana (Mouse-ear cress)).